The chain runs to 710 residues: Polyribonucleotide nucleotidyltransferase (710 aa).

Mg(2+) contacts are provided by D486 and D492. One can recognise a KH domain in the interval 553-612; the sequence is PRFETIKIHPDKIRDIIGKGGATIRSITEETNSSIDIDDDGTVKVYADDNEALQAALNRI. In terms of domain architecture, S1 motif spans 622–690; it reads GAIYEGTVVR…QRGRIKLSIK (69 aa).

This sequence belongs to the polyribonucleotide nucleotidyltransferase family. Component of the RNA degradosome, which is a multiprotein complex involved in RNA processing and mRNA degradation. Mg(2+) is required as a cofactor.

Its subcellular location is the cytoplasm. The catalysed reaction is RNA(n+1) + phosphate = RNA(n) + a ribonucleoside 5'-diphosphate. In terms of biological role, involved in mRNA degradation. Catalyzes the phosphorolysis of single-stranded polyribonucleotides processively in the 3'- to 5'-direction. This Cellvibrio japonicus (strain Ueda107) (Pseudomonas fluorescens subsp. cellulosa) protein is Polyribonucleotide nucleotidyltransferase.